The primary structure comprises 111 residues: COX assembly mitochondrial protein (111 aa).

One can recognise a CHCH domain in the interval 39–82; that stretch reads YKKCANFVQAMADCAKANGMKVFPTCDKQRDEMKSCLLFYQTDE. Short sequence motifs (cx9C motif) lie at residues 42-52 and 64-74; these read CANFVQAMADC and CDKQRDEMKSC. Cystine bridges form between Cys-42-Cys-74 and Cys-52-Cys-64.

The protein belongs to the CMC family.

Its subcellular location is the mitochondrion inner membrane. Its function is as follows. Required for mitochondrial cytochrome c oxidase (COX) assembly and respiration. Binds copper. May be involved in copper trafficking and distribution to mitochondrial COX and SOD1. This Saccharomyces cerevisiae (strain RM11-1a) (Baker's yeast) protein is COX assembly mitochondrial protein (CMC1).